We begin with the raw amino-acid sequence, 536 residues long: MSTKYVFVTGGVVSALGKGITAASLGRLLKNRGVKISIQKFDPYLNVDPGTMSPYQHGEVFVTDDGAETDLDLGHYERFIDESLTQNSNVTTGKIYSSVIEKERRGEYLGGTVQVIPHITNAIKDKVYQVAKDRDVDVVITEIGGTVGDIESQPFLESIRQIKSEVGAENVCYIHVTLVPYLGKAGELKTKPTQHSVKELRMIGIQPDIIVCRTEKELSDDVKAKIGLFCNIDGRSVIQNLDAENLYEVPLMLHSEGLDNLVCEKLHLGCKDIDNSEWIQMVQKIKNLKNNVKIALVGKYVELHDAYISVVEALSHGGYANNTNVEIKWINAENIENSNAQELLKDVDGILVPGGFGDRGIEGKIAAIKWARENKKPFLGICLGMQCAVIEYARSVLGYEDANSSEINPGTNYPVIDLMPDQKDIENLGGTMRLGLYPCRLAENTNSYEVYKNEIINERHRHRYEFNNEFRKQITEAGMKIAGTSPDERLVEIVEVEDHPWYVAVQFHPELKSRPNKPHKLFVGFIKAALEENKSK.

The segment at 1-268 is amidoligase domain; it reads MSTKYVFVTG…DNLVCEKLHL (268 aa). Position 14 (Ser14) interacts with CTP. A UTP-binding site is contributed by Ser14. 15–20 contributes to the ATP binding site; that stretch reads ALGKGI. L-glutamine is bound at residue Tyr55. Asp72 serves as a coordination point for ATP. Asp72 and Glu142 together coordinate Mg(2+). Residues 149-151, 189-194, and Lys225 each bind CTP; these read DIE and KTKPTQ. Residues 189 to 194 and Lys225 each bind UTP; that span reads KTKPTQ. The region spanning 293 to 535 is the Glutamine amidotransferase type-1 domain; it reads KIALVGKYVE…IKAALEENKS (243 aa). Residue Gly355 coordinates L-glutamine. Cys382 functions as the Nucleophile; for glutamine hydrolysis in the catalytic mechanism. L-glutamine-binding positions include 383-386, Glu406, and Arg463; that span reads LGMQ. Residues His508 and Glu510 contribute to the active site.

Belongs to the CTP synthase family. In terms of assembly, homotetramer.

It carries out the reaction UTP + L-glutamine + ATP + H2O = CTP + L-glutamate + ADP + phosphate + 2 H(+). It catalyses the reaction L-glutamine + H2O = L-glutamate + NH4(+). The catalysed reaction is UTP + NH4(+) + ATP = CTP + ADP + phosphate + 2 H(+). It functions in the pathway pyrimidine metabolism; CTP biosynthesis via de novo pathway; CTP from UDP: step 2/2. Allosterically activated by GTP, when glutamine is the substrate; GTP has no effect on the reaction when ammonia is the substrate. The allosteric effector GTP functions by stabilizing the protein conformation that binds the tetrahedral intermediate(s) formed during glutamine hydrolysis. Inhibited by the product CTP, via allosteric rather than competitive inhibition. Its function is as follows. Catalyzes the ATP-dependent amination of UTP to CTP with either L-glutamine or ammonia as the source of nitrogen. Regulates intracellular CTP levels through interactions with the four ribonucleotide triphosphates. The sequence is that of CTP synthase from Clostridium beijerinckii (strain ATCC 51743 / NCIMB 8052) (Clostridium acetobutylicum).